Consider the following 178-residue polypeptide: Fatty-acid and retinol-binding protein 1 (178 aa).

The first 16 residues, 1 to 16 (MYHQLILMALIGVIMA), serve as a signal peptide directing secretion. 2 N-linked (GlcNAc...) asparagine glycosylation sites follow: N44 and N75. 2 coiled-coil regions span residues 67-89 (DAALEALKNTSDKLYQKAVELRN) and 122-154 (QKLDMEKLKQAARDIIAKYEALNEETREELKAT). N157 carries an N-linked (GlcNAc...) asparagine glycan.

The protein belongs to the fatty-acid and retinol-binding protein (FARBP) family. Post-translationally, N-glycosylated.

It is found in the secreted. Binds retinol and different fatty acids. This is Fatty-acid and retinol-binding protein 1 from Onchocerca dukei (Filarial nematode worm).